Here is a 293-residue protein sequence, read N- to C-terminus: ATP synthase gamma chain (293 aa).

This sequence belongs to the ATPase gamma chain family. In terms of assembly, F-type ATPases have 2 components, CF(1) - the catalytic core - and CF(0) - the membrane proton channel. CF(1) has five subunits: alpha(3), beta(3), gamma(1), delta(1), epsilon(1). CF(0) has three main subunits: a, b and c.

It localises to the cell inner membrane. Its function is as follows. Produces ATP from ADP in the presence of a proton gradient across the membrane. The gamma chain is believed to be important in regulating ATPase activity and the flow of protons through the CF(0) complex. This chain is ATP synthase gamma chain, found in Sinorhizobium fredii (strain NBRC 101917 / NGR234).